The chain runs to 352 residues: C5a anaphylatoxin chemotactic receptor 1 (352 aa).

Residues 1–11 (MDPISNDSSEI) are compositionally biased toward polar residues. The interval 1 to 20 (MDPISNDSSEITYDYSDGTP) is disordered. Over 1 to 38 (MDPISNDSSEITYDYSDGTPNPDMPADGVYIPKMEPGD) the chain is Extracellular. N-linked (GlcNAc...) asparagine glycosylation is present at asparagine 6. 2 positions are modified to sulfotyrosine: tyrosine 13 and tyrosine 15. A helical transmembrane segment spans residues 39–65 (IAALIIYLAVFLVGVTGNALVVWVTAF). The Cytoplasmic portion of the chain corresponds to 66–70 (EAKRT). A helical membrane pass occupies residues 71–94 (VNAIWFLNLAVADLLSCLALPILF). Over 95–111 (TSIVKHNHWPFGDQACI) the chain is Extracellular. Cysteine 110 and cysteine 189 are disulfide-bonded. The chain crosses the membrane as a helical span at residues 112 to 133 (VLPSLILLNMYSSILLLATISA). The Cytoplasmic segment spans residues 134-154 (DRFLLVFKPIWCQKFRRPGLA). The chain crosses the membrane as a helical span at residues 155 to 175 (WMACGVTWVLALLLTIPSFVF). Over 176–202 (RRIHKDPYSDSILCNIDYSKGPFFIEK) the chain is Extracellular. Residues 203 to 228 (AIAILRLMVGFVLPLLTLNICYTFLL) traverse the membrane as a helical segment. Residues 229-244 (IRTWSRKATRSTKTLK) lie on the Cytoplasmic side of the membrane. The chain crosses the membrane as a helical span at residues 245 to 267 (VVMAVVTCFFVFWLPYQVTGVIL). Topologically, residues 268–284 (AWLPRSSSTFQSVERLN) are extracellular. A helical transmembrane segment spans residues 285-305 (SLCVSLAYINCCVNPIIYVMA). The Cytoplasmic segment spans residues 306–352 (GQGFHGRLRRSLPSIIRNVLSEDSLGRDSKSFTRSTMDTSTQKSQAV). Phosphoserine occurs at positions 316, 319, 326, 329, 334, 336, and 340. The interval 332–352 (RDSKSFTRSTMDTSTQKSQAV) is disordered. Positions 337-352 (FTRSTMDTSTQKSQAV) are enriched in polar residues.

The protein belongs to the G-protein coupled receptor 1 family. As to quaternary structure, homodimer. May also form higher-order oligomers. Interacts (when phosphorylated) with ARRB1 and ARRB2; the interaction is associated with internalization of C5aR. In terms of processing, sulfation plays a critical role in the association of C5aR with C5a, but no significant role in the ability of the receptor to transduce a signal and mobilize calcium in response to a small peptide agonist. Phosphorylated on serine residues in response to C5a binding, resulting in internalization of the receptor and short-term desensitization to the ligand.

Its subcellular location is the cell membrane. It localises to the cytoplasmic vesicle. Its function is as follows. Receptor for the chemotactic and inflammatory peptide anaphylatoxin C5a. The ligand interacts with at least two sites on the receptor: a high-affinity site on the extracellular N-terminus, and a second site in the transmembrane region which activates downstream signaling events. Receptor activation stimulates chemotaxis, granule enzyme release, intracellular calcium release and superoxide anion production. The sequence is that of C5a anaphylatoxin chemotactic receptor 1 (C5ar1) from Rattus norvegicus (Rat).